Here is a 151-residue protein sequence, read N- to C-terminus: Acidic phospholipase A2 2 (151 aa).

The first 27 residues, methionine 1–leucine 27, serve as a signal peptide directing secretion. Disulfide bonds link cysteine 38–cysteine 104, cysteine 54–cysteine 151, cysteine 56–cysteine 72, cysteine 71–cysteine 132, cysteine 78–cysteine 125, cysteine 88–cysteine 118, and cysteine 111–cysteine 123. 3 residues coordinate Ca(2+): tyrosine 55, glycine 57, and glycine 59. Residue histidine 75 is part of the active site. Aspartate 76 serves as a coordination point for Ca(2+). Aspartate 126 is a catalytic residue.

It belongs to the phospholipase A2 family. Group I subfamily. D49 sub-subfamily. Requires Ca(2+) as cofactor. As to expression, expressed by the venom gland.

The protein resides in the secreted. The catalysed reaction is a 1,2-diacyl-sn-glycero-3-phosphocholine + H2O = a 1-acyl-sn-glycero-3-phosphocholine + a fatty acid + H(+). Functionally, PLA2 catalyzes the calcium-dependent hydrolysis of the 2-acyl groups in 3-sn-phosphoglycerides. The protein is Acidic phospholipase A2 2 of Tropidechis carinatus (Australian rough-scaled snake).